The following is a 472-amino-acid chain: Protein c-ets-2-B (472 aa).

The PNT domain maps to 85 to 170 (DTFNGFAKER…EHLEEMMKEY (86 aa)). Positions 366–446 (IQLWQFLLEL…SGKRYVYRFV (81 aa)) form a DNA-binding region, ETS.

Belongs to the ETS family.

It localises to the nucleus. Functionally, probable transcription factor. The protein is Protein c-ets-2-B (ets2-b) of Xenopus laevis (African clawed frog).